Consider the following 329-residue polypeptide: MEKRGDVILGVEDESGQPVSALSILSLLERVSTIIDGVQASQQRMEERQQQLEGSVSAVQSELLKLARDHGATATTVDKLLQKARRVSTHVKEVRSRVEKQNVRVKKVETTQDELLTRNKFRVVIYQGEKEVPSVAVTKTPKGAGLAELEVEPDEYDIPADLSSDEEYMVVEDAESSRGARLKQSGLKGIENIKAAFSKENMNKTREKTRENLSKTKESLSKTGQTLGTKFNTLGEKIVPPEQREKIKQSSERLKENIAKKAPTKESFKIKLKKERTVAEGQEGAEAEPAVTPPKGRKSSPDVTYTEVVTENKREGPVSEEGATRIHED.

Disordered stretches follow at residues 198–260 (SKEN…NIAK) and 274–329 (KERT…IHED). The stretch at 198-262 (SKENMNKTRE…RLKENIAKKA (65 aa)) forms a coiled coil. Residues 201 to 220 (NMNKTREKTRENLSKTKESL) are compositionally biased toward basic and acidic residues. Residues 221–232 (SKTGQTLGTKFN) are compositionally biased toward polar residues. The segment covering 242–260 (EQREKIKQSSERLKENIAK) has biased composition (basic and acidic residues). Low complexity predominate over residues 279–290 (AEGQEGAEAEPA). Position 292 is a phosphothreonine (threonine 292). The segment covering 310–329 (TENKREGPVSEEGATRIHED) has biased composition (basic and acidic residues).

Belongs to the CAVIN family.

The protein localises to the cytoplasm. The protein resides in the myofibril. It is found in the sarcomere. It localises to the membrane. Its subcellular location is the caveola. Induces rhoa activation and activates nppa transcription and myofibrillar organization through the rho/rock signaling pathway. The chain is Caveolae-associated protein 4a (cavin4a) from Danio rerio (Zebrafish).